Consider the following 179-residue polypeptide: MSLKDRFDRFIDYFTEDEDSSLPYEKRDEPVFTSVNSSQEPALPMNQPSQSAGAKENNITRLHARQQELANQSQRATDKVIIDVRYPRKYEDATEIVDLLAGNESILIDFQYMTEVQARRCLDYLDGACHVLAGNLKKVASTMYLLTPVNVIVNVEDIRLPDEDQQGEFGFDMKRNRVR.

The disordered stretch occupies residues Asp19–Lys55. Positions Thr33–Lys55 are enriched in polar residues.

The protein belongs to the SepF family. As to quaternary structure, homodimer. Interacts with FtsZ.

Its subcellular location is the cytoplasm. Cell division protein that is part of the divisome complex and is recruited early to the Z-ring. Probably stimulates Z-ring formation, perhaps through the cross-linking of FtsZ protofilaments. Its function overlaps with FtsA. The protein is Cell division protein SepF of Streptococcus pneumoniae (strain JJA).